We begin with the raw amino-acid sequence, 271 residues long: Delta(3,5)-Delta(2,4)-dienoyl-CoA isomerase (271 aa).

Substrate contacts are provided by residues 62–66 (SGGKF) and Leu-120. Glu-152 acts as the Proton donor/acceptor in catalysis. The Peroxisome targeting signal (PTS1) motif lies at 269–271 (HKL).

Belongs to the enoyl-CoA hydratase/isomerase family. Interacts with ECI1.

It is found in the peroxisome. The enzyme catalyses a (3E,5Z)-dienoyl-CoA = a (2E,4E)-(5,6-saturated)-dienoyl-CoA. The protein operates within lipid metabolism; fatty acid beta-oxidation. In terms of biological role, peroxisomal di-isomerase that is involved in fatty acid metabolism enzyme by converting 3,5-dienoyl-CoAs to the corresponding 2,4-dienoyl-CoAs. Required for ECI1 to be located to the peroxisome. This chain is Delta(3,5)-Delta(2,4)-dienoyl-CoA isomerase, found in Saccharomyces cerevisiae (strain ATCC 204508 / S288c) (Baker's yeast).